A 275-amino-acid chain; its full sequence is MGQKINPHGFRLGITTDWKSRWYADKQYADYVKEDVAIRRLLSSGLERAGIADVEIERTRDRVRVDIHTARPGIVIGRRGTEADRIRADLEKLTGKQVQLNILEVKNPESQAQLVAQGVAEQLSNRVAFRRAMRKAIQSAMRQPNVKGIRVQCSGRLGGAEMSRSEFYREGRVPLHTLRADIDYGLYEAKTTFGRIGVKVWIYKGDIVGGKRELAAAVPAGADRPRRERPAGSRPRRSGASGTTATGTEAGRAVGSEEPAAAESATTPEAQSTES.

The region spanning 38 to 106 (IRRLLSSGLE…QVQLNILEVK (69 aa)) is the KH type-2 domain. Positions 217–275 (AVPAGADRPRRERPAGSRPRRSGASGTTATGTEAGRAVGSEEPAAAESATTPEAQSTES) are disordered. Residues 238 to 275 (SGASGTTATGTEAGRAVGSEEPAAAESATTPEAQSTES) are compositionally biased toward low complexity.

This sequence belongs to the universal ribosomal protein uS3 family. Part of the 30S ribosomal subunit. Forms a tight complex with proteins S10 and S14.

In terms of biological role, binds the lower part of the 30S subunit head. Binds mRNA in the 70S ribosome, positioning it for translation. The polypeptide is Small ribosomal subunit protein uS3 (Mycobacterium marinum (strain ATCC BAA-535 / M)).